The following is a 404-amino-acid chain: Serine/threonine transporter SstT (404 aa).

9 helical membrane passes run 12–32, 53–73, 81–101, 140–160, 177–197, 216–236, 287–307, 329–349, and 356–376; these read GGNL…LALV, AIAP…KEVG, ILVM…VLSF, ALAN…GIAL, AVSF…FGLV, LGVL…LIVF, VAIP…VTVL, IVAS…LLLI, and FNIP…IGVI.

The protein belongs to the dicarboxylate/amino acid:cation symporter (DAACS) (TC 2.A.23) family.

Its subcellular location is the cell inner membrane. The catalysed reaction is L-serine(in) + Na(+)(in) = L-serine(out) + Na(+)(out). The enzyme catalyses L-threonine(in) + Na(+)(in) = L-threonine(out) + Na(+)(out). Its function is as follows. Involved in the import of serine and threonine into the cell, with the concomitant import of sodium (symport system). This chain is Serine/threonine transporter SstT, found in Actinobacillus pleuropneumoniae serotype 7 (strain AP76).